A 416-amino-acid polypeptide reads, in one-letter code: Probable histone-binding protein lin-53 (416 aa).

WD repeat units lie at residues 118–158 (NHEG…SVPK), 170–210 (GHTK…GANG), 220–260 (GHES…PGHA), 263–303 (AHSA…LKLH), 307–347 (SHRD…EDQT), and 364–404 (GHTA…YNDV).

This sequence belongs to the WD repeat RBAP46/RBAP48/MSI1 family. Binds directly to helix 1 of the histone fold of histone H4, a region that is not accessible when H4 is in chromatin. Probable component of a NuRD-like complex, composed of at least lin-53 and hda-1. Interacts with lin-35. Interacts with hda-1; the interaction is direct. Component of the DRM complex, at least composed of lin-9, lin-35, lin-37, lin-52, lin-53, lin-54- dpl-1 and efl-1. Interacts with hcp-3.

Its subcellular location is the nucleus. It localises to the chromosome. The protein resides in the centromere. Its function is as follows. Core histone-binding subunit that may target chromatin assembly factors, chromatin remodeling factors and histone deacetylases to their histone substrates in a manner that is regulated by nucleosomal DNA. Required for hcp-3 and his-1 stabilization, localization of hcp-3 to centromeres and for proper chromosome segregation. Synthetic multivulva class B (synMuvB) protein. SynMuvB proteins are required to repress the induction of vulval development by Ras signaling and probably act by forming the multiprotein DRM complex that represses transcription. The sequence is that of Probable histone-binding protein lin-53 from Caenorhabditis briggsae.